Here is a 159-residue protein sequence, read N- to C-terminus: ATP synthase subunit b 2 (159 aa).

A helical transmembrane segment spans residues 1–21 (MDATFWALVALIIFVGILLYM).

The protein belongs to the ATPase B chain family. F-type ATPases have 2 components, F(1) - the catalytic core - and F(0) - the membrane proton channel. F(1) has five subunits: alpha(3), beta(3), gamma(1), delta(1), epsilon(1). F(0) has three main subunits: a(1), b(2) and c(10-14). The alpha and beta chains form an alternating ring which encloses part of the gamma chain. F(1) is attached to F(0) by a central stalk formed by the gamma and epsilon chains, while a peripheral stalk is formed by the delta and b chains.

The protein localises to the cell inner membrane. In terms of biological role, f(1)F(0) ATP synthase produces ATP from ADP in the presence of a proton or sodium gradient. F-type ATPases consist of two structural domains, F(1) containing the extramembraneous catalytic core and F(0) containing the membrane proton channel, linked together by a central stalk and a peripheral stalk. During catalysis, ATP synthesis in the catalytic domain of F(1) is coupled via a rotary mechanism of the central stalk subunits to proton translocation. Component of the F(0) channel, it forms part of the peripheral stalk, linking F(1) to F(0). This is ATP synthase subunit b 2 from Chelativorans sp. (strain BNC1).